Here is a 498-residue protein sequence, read N- to C-terminus: MASQGTKRSYEQMETGGERQNATEIRASVGRMVGGIGRFYIQMCTELKLSDYEGRLIQNSITMERMVLSAFDERRNKYLEEHPSAGKDPKKTGGPIYRRRDGKWVRELILYDKEEIRRIWRQANNGEDATAGLTHLMIWHSNLNDATYQRTRALVRTGMDPRMCSLMQGSTLPRRSGAAGAAVKGVGTMVMELIRMIKRGINDRNFWRGENGRRTRIAYERMCNILKGKFQTAAQRAMMDQVRESRNPGNAEIEDLIFLARSALILRGSVAHKSCLPACVYGLAVASGYDFEREGYSLVGIDPFRLLQNSQVFSLIRPNENPAHKSQLVWMACHSAAFEDLRVSSFIRGTRIVPRGQLSTRGVQIASNENMDTMDSNTLELRSRYWAIRTRSGGNTNQQRASAGQISVQPTFSVQRNLPFERATIMAAFTGNTEGRTSDMRTEIIRMMESAKPEDVSFQGRGVFELSDEKATNPIVPSFDMSNEGSYFFGDNAEEFEN.

A Unconventional nuclear localization signal motif is present at residues 1–18 (MASQGTKRSYEQMETGGE). Positions 1–21 (MASQGTKRSYEQMETGGERQN) are disordered. Positions 198 to 216 (KRGINDRNFWRGENGRRTR) match the Bipartite nuclear localization signal motif.

The protein belongs to the influenza viruses nucleoprotein family. Homomultimerizes to form the nucleocapsid. May bind host exportin-1/XPO1. Binds to viral genomic RNA. Protein-RNA contacts are mediated by a combination of electrostatic interactions between positively charged residues and the phosphate backbone and planar interactions between aromatic side chains and bases. Late in virus-infected cells, may be cleaved from a 56-kDa protein to a 53-kDa protein by a cellular caspase. This cleavage might be a marker for the onset of apoptosis in infected cells or have a specific function in virus host interaction.

It is found in the virion. The protein resides in the host nucleus. In terms of biological role, encapsidates the negative strand viral RNA, protecting it from nucleases. The encapsidated genomic RNA is termed the ribonucleoprotein (RNP) and serves as template for transcription and replication. The RNP needs to be localized in the host nucleus to start an infectious cycle, but is too large to diffuse through the nuclear pore complex. NP comprises at least 2 nuclear localization signals that are responsible for the active RNP import into the nucleus through cellular importin alpha/beta pathway. Later in the infection, nclear export of RNPs are mediated through viral proteins NEP interacting with M1 which binds nucleoproteins. It is possible that nucleoprotein binds directly host exportin-1/XPO1 and plays an active role in RNPs nuclear export. M1 interaction with RNP seems to hide nucleoprotein's nuclear localization signals. Soon after a virion infects a new cell, M1 dissociates from the RNP under acidification of the virion driven by M2 protein. Dissociation of M1 from RNP unmasks nucleoprotein's nuclear localization signals, targeting the RNP to the nucleus. This is Nucleoprotein from Influenza A virus (strain A/Silky Chicken/Hong Kong/SF189/2001 H5N1 genotype A).